A 323-amino-acid chain; its full sequence is Quinolinate synthase (323 aa).

Iminosuccinate is bound by residues H37 and S54. Residue C99 coordinates [4Fe-4S] cluster. Residues 125 to 127 and S142 each bind iminosuccinate; that span reads YIN. C185 is a [4Fe-4S] cluster binding site. Iminosuccinate-binding positions include 211–213 and T228; that span reads HPE. C278 is a binding site for [4Fe-4S] cluster.

It belongs to the quinolinate synthase family. Type 2 subfamily. Requires [4Fe-4S] cluster as cofactor.

It is found in the cytoplasm. It carries out the reaction iminosuccinate + dihydroxyacetone phosphate = quinolinate + phosphate + 2 H2O + H(+). It participates in cofactor biosynthesis; NAD(+) biosynthesis; quinolinate from iminoaspartate: step 1/1. In terms of biological role, catalyzes the condensation of iminoaspartate with dihydroxyacetone phosphate to form quinolinate. The polypeptide is Quinolinate synthase (Trichodesmium erythraeum (strain IMS101)).